A 311-amino-acid polypeptide reads, in one-letter code: Tyrosine recombinase XerC (311 aa).

The region spanning 11–97 is the Core-binding (CB) domain; sequence DALAQPLERF…SLRSFLDFLI (87 aa). Positions 118–298 constitute a Tyr recombinase domain; sequence TLPKNLDVDE…DFQHLAQVYD (181 aa). Active-site residues include arginine 157, lysine 181, histidine 250, arginine 253, and histidine 276. The active-site O-(3'-phospho-DNA)-tyrosine intermediate is the tyrosine 285.

The protein belongs to the 'phage' integrase family. XerC subfamily. In terms of assembly, forms a cyclic heterotetrameric complex composed of two molecules of XerC and two molecules of XerD.

The protein localises to the cytoplasm. Functionally, site-specific tyrosine recombinase, which acts by catalyzing the cutting and rejoining of the recombining DNA molecules. The XerC-XerD complex is essential to convert dimers of the bacterial chromosome into monomers to permit their segregation at cell division. It also contributes to the segregational stability of plasmids. This chain is Tyrosine recombinase XerC, found in Vibrio cholerae serotype O1 (strain ATCC 39541 / Classical Ogawa 395 / O395).